The following is a 571-amino-acid chain: Septation ring formation regulator EzrA (571 aa).

The Extracellular portion of the chain corresponds to 1–3 (MYY). The helical transmembrane segment at 4–22 (MLIGFIIVVIAVISAGYIL) threads the bilayer. The Cytoplasmic portion of the chain corresponds to 23 to 571 (KRKHYQRINE…ESKVSVDDIE (549 aa)). Coiled coils occupy residues 170–215 (EAKL…QMER), 248–299 (LAQM…TLEH), 326–374 (DALA…ASGE), 400–437 (NFAE…ERER), and 478–529 (RIAE…ENHF).

The protein belongs to the EzrA family.

It is found in the cell membrane. Negative regulator of FtsZ ring formation; modulates the frequency and position of FtsZ ring formation. Inhibits FtsZ ring formation at polar sites. Interacts either with FtsZ or with one of its binding partners to promote depolymerization. The sequence is that of Septation ring formation regulator EzrA from Listeria innocua serovar 6a (strain ATCC BAA-680 / CLIP 11262).